We begin with the raw amino-acid sequence, 2517 residues long: Non-reducing polyketide synthase pkbA (2517 aa).

The tract at residues leucine 59–histidine 250 is N-terminal acylcarrier protein transacylase domain (SAT). The Ketosynthase family 3 (KS3) domain occupies serine 380–glutamate 775. Catalysis depends on for beta-ketoacyl synthase activity residues cysteine 547, histidine 682, and histidine 721. A malonyl-CoA:ACP transacylase (MAT) domain region spans residues alanine 849 to threonine 1158. Serine 935 serves as the catalytic For acyl/malonyl transferase activity. The N-terminal hotdog fold stretch occupies residues glutamate 1221 to threonine 1353. Residues glutamate 1221–glycine 1530 enclose the PKS/mFAS DH domain. Positions phenylalanine 1251–glutamine 1525 are product template (PT) domain. Residue histidine 1255 is the Proton acceptor; for dehydratase activity of the active site. Residues aspartate 1379–glycine 1530 form a C-terminal hotdog fold region. The Proton donor; for dehydratase activity role is filled by aspartate 1437. Residues arginine 1574–leucine 1651 enclose the Carrier 1 domain. The residue at position 1611 (serine 1611) is an O-(pantetheine 4'-phosphoryl)serine. Residues glutamine 1659 to isoleucine 1684 are disordered. Residues aspartate 1662 to serine 1673 show a composition bias toward acidic residues. The Carrier 2 domain maps to threonine 1685–asparagine 1761. At serine 1721 the chain carries O-(pantetheine 4'-phosphoryl)serine. The tract at residues leucine 1976 to phenylalanine 2075 is methyltransferase (CMeT) domain. The interval leucine 2200–valine 2514 is thioesterase (TE) domain.

Requires pantetheine 4'-phosphate as cofactor.

The enzyme catalyses 3 malonyl-CoA + acetyl-CoA + S-adenosyl-L-methionine + H(+) = 3-methylorsellinate + S-adenosyl-L-homocysteine + 3 CO2 + 4 CoA. It functions in the pathway phytotoxin biosynthesis. Non-reducing polyketide synthase; part of the gene cluster that mediates the biosynthesis of cichorine, a phytotoxin active against knapweed, corn, and soybeans. The first step in the pathway is performed by the non-reducing polyketide synthase pkbA that condenses one acetyl-CoA starter unit with 3 malonyl-CoA units. PkbA also catalyzes one methylation step to produce 3-methylorsellinate. The nonribosomal peptide synthase-like protein cicB, the cytochrome P450 monooxygenase cicH and the O-methyltransferase cicE are involved in the conversion of 3-methylorsellinate into nidulol. CicB converts 3-methylorsellinate to a yet unidentified intermediate, cicH may play a ring-closing role for cichorine and cicE is plausibly responsible for the methylation of one of the phenol groups. The oxidoreductase cicC acts downstream with still unidentified enzymes to further convert nidulol into cichorin. This chain is Non-reducing polyketide synthase pkbA, found in Emericella nidulans (strain FGSC A4 / ATCC 38163 / CBS 112.46 / NRRL 194 / M139) (Aspergillus nidulans).